A 616-amino-acid polypeptide reads, in one-letter code: Nucleoprotein (616 aa).

Short sequence motifs (nuclear localization signal) lie at residues Arg230–Arg233 and Lys473–Lys476.

Homomultimerizes to form the nucleocapsid. Binds to viral genomic RNA. Protein-RNA contacts are mediated by a combination of electrostatic interactions between positively charged residues and the phosphate backbone and planar interactions between aromatic side chains and bases.

Its subcellular location is the virion. The protein localises to the host nucleus. It is found in the host nucleolus. Its function is as follows. Encapsidates the negative strand viral RNA, protecting it from nucleases. The encapsidated genomic RNA is termed the ribonucleoprotein (RNP) and serves as template for transcription and replication. The polypeptide is Nucleoprotein (Gadus morhua (Atlantic cod)).